The sequence spans 476 residues: Bifunctional protein HldE (476 aa).

A ribokinase region spans residues 1-319 (MKISLPAFEK…EALSLSHGES (319 aa)). ATP is bound at residue 195 to 198 (NMSE). Asp264 is a catalytic residue. The tract at residues 345 to 476 (MTNGCFDILH…AIIQNIMANQ (132 aa)) is cytidylyltransferase.

It in the N-terminal section; belongs to the carbohydrate kinase PfkB family. The protein in the C-terminal section; belongs to the cytidylyltransferase family. In terms of assembly, homodimer.

It catalyses the reaction D-glycero-beta-D-manno-heptose 7-phosphate + ATP = D-glycero-beta-D-manno-heptose 1,7-bisphosphate + ADP + H(+). The catalysed reaction is D-glycero-beta-D-manno-heptose 1-phosphate + ATP + H(+) = ADP-D-glycero-beta-D-manno-heptose + diphosphate. Its pathway is nucleotide-sugar biosynthesis; ADP-L-glycero-beta-D-manno-heptose biosynthesis; ADP-L-glycero-beta-D-manno-heptose from D-glycero-beta-D-manno-heptose 7-phosphate: step 1/4. The protein operates within nucleotide-sugar biosynthesis; ADP-L-glycero-beta-D-manno-heptose biosynthesis; ADP-L-glycero-beta-D-manno-heptose from D-glycero-beta-D-manno-heptose 7-phosphate: step 3/4. In terms of biological role, catalyzes the phosphorylation of D-glycero-D-manno-heptose 7-phosphate at the C-1 position to selectively form D-glycero-beta-D-manno-heptose-1,7-bisphosphate. Functionally, catalyzes the ADP transfer from ATP to D-glycero-beta-D-manno-heptose 1-phosphate, yielding ADP-D-glycero-beta-D-manno-heptose. The chain is Bifunctional protein HldE from Shewanella pealeana (strain ATCC 700345 / ANG-SQ1).